A 559-amino-acid polypeptide reads, in one-letter code: Tissue-type plasminogen activator (559 aa).

The signal sequence occupies residues 1–17; it reads MKGELLCVLLLCGVAFT. Residues 18–29 constitute a propeptide that is removed on maturation; the sequence is LPDQGIHRRFRR. The propeptide at 30 to 32 is removed by plasmin; that stretch reads GAR. In terms of domain architecture, Fibronectin type-I spans 36–78; sequence ATCRDEQTQTTYQQHQSWLRPMLRGNRVEYCRCNSGLAQCHSV. Cystine bridges form between Cys38–Cys68, Cys66–Cys75, Cys83–Cys94, Cys88–Cys105, Cys107–Cys116, Cys124–Cys205, Cys145–Cys187, Cys176–Cys200, Cys213–Cys294, Cys234–Cys276, Cys265–Cys289, Cys297–Cys428, Cys340–Cys356, Cys348–Cys417, Cys442–Cys516, Cys474–Cys490, and Cys506–Cys534. Residues 39–49 form an important for binding to annexin A2 region; that stretch reads RDEQTQTTYQQ. The 39-residue stretch at 79–117 folds into the EGF-like domain; that stretch reads PVRSCSEPRCFNGGTCQQALYFSDFVCQCPDGFVGKRCD. Kringle domains follow at residues 124-205 and 213-294; these read CFEG…TPAC and CYVG…MSPC. The N-linked (GlcNAc...) asparagine glycan is linked to Asn149. One can recognise a Peptidase S1 domain in the interval 309–558; sequence IKGGLFTDIT…YLNWIQDNMK (250 aa). Active-site charge relay system residues include His355 and Asp404. Asn481 carries an N-linked (GlcNAc...) asparagine glycan. Residue Ser510 is the Charge relay system of the active site.

It belongs to the peptidase S1 family. In terms of assembly, heterodimer of chain A and chain B held by a disulfide bond. Binds to fibrin with high affinity. This interaction leads to an increase in the catalytic efficiency of the enzyme due to an increase in affinity for plasminogen. Similarly, binding to heparin increases the activation of plasminogen. Binds to annexin A2, cytokeratin-8, fibronectin and laminin. Binds to mannose receptor and the low-density lipoprotein receptor-related protein (LRP1); these proteins are involved in TPA clearance. Binds LRP1B; binding is followed by internalization and degradation. Forms heterodimer with SERPINA5. Interacts with SERPINE1. In complex with SERPINE1, interacts with SORL1. Post-translationally, the single chain, almost fully active enzyme, can be further processed into a two-chain fully active form by a cleavage after Arg-308 catalyzed by plasmin, tissue kallikrein or factor Xa.

The protein resides in the secreted. It localises to the extracellular space. The enzyme catalyses Specific cleavage of Arg-|-Val bond in plasminogen to form plasmin.. Its activity is regulated as follows. Inhibited by SERPINA5. Inhibited by SERPINE1. In terms of biological role, converts the abundant, but inactive, zymogen plasminogen to plasmin by hydrolyzing a single Arg-Val bond in plasminogen. By controlling plasmin-mediated proteolysis, it plays an important role in tissue remodeling and degradation, in cell migration and many other physiopathological events. During oocyte activation, plays a role in cortical granule reaction in the zona reaction, which contributes to the block to polyspermy. This chain is Tissue-type plasminogen activator (Plat), found in Rattus norvegicus (Rat).